A 184-amino-acid chain; its full sequence is Large ribosomal subunit protein uL6 (184 aa).

This sequence belongs to the universal ribosomal protein uL6 family. As to quaternary structure, part of the 50S ribosomal subunit.

This protein binds to the 23S rRNA, and is important in its secondary structure. It is located near the subunit interface in the base of the L7/L12 stalk, and near the tRNA binding site of the peptidyltransferase center. The protein is Large ribosomal subunit protein uL6 of Desulfurococcus amylolyticus (strain DSM 18924 / JCM 16383 / VKM B-2413 / 1221n) (Desulfurococcus kamchatkensis).